A 546-amino-acid chain; its full sequence is DNA ligase (546 aa).

An ATP-binding site is contributed by Glu-244. The active-site N6-AMP-lysine intermediate is the Lys-246. 6 residues coordinate ATP: Arg-251, Arg-266, Glu-295, Phe-334, Arg-405, and Lys-411.

This sequence belongs to the ATP-dependent DNA ligase family. Mg(2+) serves as cofactor.

It carries out the reaction ATP + (deoxyribonucleotide)n-3'-hydroxyl + 5'-phospho-(deoxyribonucleotide)m = (deoxyribonucleotide)n+m + AMP + diphosphate.. DNA ligase that seals nicks in double-stranded DNA during DNA replication, DNA recombination and DNA repair. This is DNA ligase from Methanocorpusculum labreanum (strain ATCC 43576 / DSM 4855 / Z).